Consider the following 274-residue polypeptide: Large ribosomal subunit protein uL2 (274 aa).

A disordered region spans residues 223 to 265 (VVMNPVDHPHGGGEGRTSGGRHPVSPWGMPTKGFKTRKNKRTD). Positions 256-265 (FKTRKNKRTD) are enriched in basic residues.

Belongs to the universal ribosomal protein uL2 family. Part of the 50S ribosomal subunit. Forms a bridge to the 30S subunit in the 70S ribosome.

Functionally, one of the primary rRNA binding proteins. Required for association of the 30S and 50S subunits to form the 70S ribosome, for tRNA binding and peptide bond formation. It has been suggested to have peptidyltransferase activity; this is somewhat controversial. Makes several contacts with the 16S rRNA in the 70S ribosome. The polypeptide is Large ribosomal subunit protein uL2 (Vibrio parahaemolyticus serotype O3:K6 (strain RIMD 2210633)).